The following is a 223-amino-acid chain: Phosphoribosylformylglycinamidine synthase subunit PurQ (223 aa).

The 221-residue stretch at 3–223 folds into the Glutamine amidotransferase type-1 domain; it reads SAVILLPGLN…LFAGALGITA (221 aa). Cys-87 serves as the catalytic Nucleophile. Catalysis depends on residues His-197 and Glu-199.

Part of the FGAM synthase complex composed of 1 PurL, 1 PurQ and 2 PurS subunits.

The protein resides in the cytoplasm. It carries out the reaction N(2)-formyl-N(1)-(5-phospho-beta-D-ribosyl)glycinamide + L-glutamine + ATP + H2O = 2-formamido-N(1)-(5-O-phospho-beta-D-ribosyl)acetamidine + L-glutamate + ADP + phosphate + H(+). The catalysed reaction is L-glutamine + H2O = L-glutamate + NH4(+). The protein operates within purine metabolism; IMP biosynthesis via de novo pathway; 5-amino-1-(5-phospho-D-ribosyl)imidazole from N(2)-formyl-N(1)-(5-phospho-D-ribosyl)glycinamide: step 1/2. Its function is as follows. Part of the phosphoribosylformylglycinamidine synthase complex involved in the purines biosynthetic pathway. Catalyzes the ATP-dependent conversion of formylglycinamide ribonucleotide (FGAR) and glutamine to yield formylglycinamidine ribonucleotide (FGAM) and glutamate. The FGAM synthase complex is composed of three subunits. PurQ produces an ammonia molecule by converting glutamine to glutamate. PurL transfers the ammonia molecule to FGAR to form FGAM in an ATP-dependent manner. PurS interacts with PurQ and PurL and is thought to assist in the transfer of the ammonia molecule from PurQ to PurL. The chain is Phosphoribosylformylglycinamidine synthase subunit PurQ from Brucella abortus biovar 1 (strain 9-941).